Here is a 513-residue protein sequence, read N- to C-terminus: ATP synthase subunit alpha (513 aa).

Gly169–Thr176 contacts ATP.

Belongs to the ATPase alpha/beta chains family. As to quaternary structure, F-type ATPases have 2 components, CF(1) - the catalytic core - and CF(0) - the membrane proton channel. CF(1) has five subunits: alpha(3), beta(3), gamma(1), delta(1), epsilon(1). CF(0) has three main subunits: a(1), b(2) and c(9-12). The alpha and beta chains form an alternating ring which encloses part of the gamma chain. CF(1) is attached to CF(0) by a central stalk formed by the gamma and epsilon chains, while a peripheral stalk is formed by the delta and b chains.

The protein localises to the cell inner membrane. It carries out the reaction ATP + H2O + 4 H(+)(in) = ADP + phosphate + 5 H(+)(out). Produces ATP from ADP in the presence of a proton gradient across the membrane. The alpha chain is a regulatory subunit. The chain is ATP synthase subunit alpha from Haemophilus influenzae (strain 86-028NP).